Reading from the N-terminus, the 61-residue chain is Small ribosomal subunit protein uS14 (61 aa).

4 residues coordinate Zn(2+): C24, C27, C40, and C43.

Belongs to the universal ribosomal protein uS14 family. Zinc-binding uS14 subfamily. As to quaternary structure, part of the 30S ribosomal subunit. Contacts proteins S3 and S10. Zn(2+) serves as cofactor.

Binds 16S rRNA, required for the assembly of 30S particles and may also be responsible for determining the conformation of the 16S rRNA at the A site. This is Small ribosomal subunit protein uS14 from Borreliella burgdorferi (strain ATCC 35210 / DSM 4680 / CIP 102532 / B31) (Borrelia burgdorferi).